A 305-amino-acid polypeptide reads, in one-letter code: UDP-3-O-acyl-N-acetylglucosamine deacetylase (305 aa).

Zn(2+)-binding residues include H79, H238, and D242. The Proton donor role is filled by H265.

It belongs to the LpxC family. Zn(2+) is required as a cofactor.

It carries out the reaction a UDP-3-O-[(3R)-3-hydroxyacyl]-N-acetyl-alpha-D-glucosamine + H2O = a UDP-3-O-[(3R)-3-hydroxyacyl]-alpha-D-glucosamine + acetate. Its pathway is glycolipid biosynthesis; lipid IV(A) biosynthesis; lipid IV(A) from (3R)-3-hydroxytetradecanoyl-[acyl-carrier-protein] and UDP-N-acetyl-alpha-D-glucosamine: step 2/6. In terms of biological role, catalyzes the hydrolysis of UDP-3-O-myristoyl-N-acetylglucosamine to form UDP-3-O-myristoylglucosamine and acetate, the committed step in lipid A biosynthesis. This Edwardsiella ictaluri (strain 93-146) protein is UDP-3-O-acyl-N-acetylglucosamine deacetylase.